We begin with the raw amino-acid sequence, 570 residues long: Periplasmic trehalase (570 aa).

A signal peptide spans 1 to 34 (MITPALRHSGTLSFAIKLTVASTLLTFASLSAHA). Substrate is bound by residues Arg-157, 164–165 (WD), Asn-201, 210–212 (RSQ), 282–284 (RPE), and Gly-315. Catalysis depends on proton donor/acceptor residues Asp-317 and Glu-501. Glu-516 is a binding site for substrate. The segment at 542-570 (KPCDSVPATRPAAPGASQPAPQKQVETTP) is disordered. Over residues 552-570 (PAAPGASQPAPQKQVETTP) the composition is skewed to low complexity.

The protein belongs to the glycosyl hydrolase 37 family. In terms of assembly, monomer.

It is found in the periplasm. It catalyses the reaction alpha,alpha-trehalose + H2O = alpha-D-glucose + beta-D-glucose. Functionally, provides the cells with the ability to utilize trehalose at high osmolarity by splitting it into glucose molecules that can subsequently be taken up by the phosphotransferase-mediated uptake system. This Citrobacter koseri (strain ATCC BAA-895 / CDC 4225-83 / SGSC4696) protein is Periplasmic trehalase.